Reading from the N-terminus, the 401-residue chain is Protein nanos (401 aa).

A disordered region spans residues Leu-181–Leu-207. The span at Pro-190 to Gln-205 shows a compositional bias: low complexity. The Nanos-type zinc-finger motif lies at His-318 to Lys-372. Cys-319, Cys-322, His-335, Cys-346, Cys-354, Cys-357, His-365, and Cys-370 together coordinate Zn(2+). 2 consecutive short sequence motifs (C2HC) follow at residues Cys-319–Cys-346 and Cys-354–Cys-370.

Belongs to the nanos family. As to quaternary structure, interacts with pum and brat. Interacts with cup. Interacts with mei-P26; possibly involved in regulation of brat levels. Interacts with wh; may be involved in mei-P26-dependent derepression of the BMP signaling pathway. Acts via the formation of a quaternary complex composed of pum, nanos, brat and the 3'-UTR mRNA of hb. Binds RNA with no specificity. As to expression, posterior part of the embryo. While the transcript is present throughout the embryo, nanos translation is controlled by smg, and the protein is found in pole plasm and pole cells. In the female ovary expressed in germline stem cells, precystoblasts and in maturing cystoblasts; in early cystoblasts expression is post-transcriptionally repressed by bam in a 3'UTR-dependent manner.

It is found in the cytoplasm. It localises to the cytoplasmic ribonucleoprotein granule. In terms of biological role, maternal RNA-binding protein that is required for germ cells proliferation and self-renewal. Acts by forming a complex with pum and brat that regulates translation and mRNA stability. The complex binds to the Nanos Response Element (NRE), a 16 bp sequence in the hb mRNA 3'-UTR and prevents its translation. Controls posterior development. Rescuing factor for the abdominal defect of posterior group mutants. The other posterior group genes are not required for nanos function but rather play a role in localization or distribution of nanos protein. The chain is Protein nanos from Drosophila melanogaster (Fruit fly).